A 404-amino-acid polypeptide reads, in one-letter code: Voltage-gated potassium channel subunit beta-3 (404 aa).

Residues 1–14 are compositionally biased toward polar residues; the sequence is MQVSIACTEQNLRS. The segment at 1–78 is disordered; it reads MQVSIACTEQ…RESTGRGTGM (78 aa). Gly residues predominate over residues 28 to 50; sequence PGGGNGGPVGGGHGNPPGGGGLG. Residues T97, W98, Q104, and D126 each coordinate NADP(+). Catalysis depends on Y131, which acts as the Proton donor/acceptor. NADP(+)-binding residues include N199, S229, R230, Q255, W284, S285, P286, L287, A288, C289, K295, K305, G364, S366, Q370, and E373.

The protein belongs to the shaker potassium channel beta subunit family. In terms of assembly, forms heteromultimeric complex with alpha subunits. Interacts with KCNA5 and KCNB2. Predominantly expressed in brain. Strongest expression in olfactory bulb and thalamic nuclei. Not detected in heart, spleen, lung, liver, skeletal muscle, kidney and testis.

It is found in the cytoplasm. Regulatory subunit of the voltage-gated potassium (Kv) channels composed of pore-forming and potassium-conducting alpha subunits and of regulatory beta subunits. The beta-3/KCNAB3 subunit may mediate closure of potassium channels. Inactivates Kv1.4/KCNA4 alpha subunit-containing Kv channel current but not Kv1.1/KCNA1 or Kv1.5/KCNA5 channels. May display nicotinamide adenine dinucleotide phosphate (NADPH)-dependent aldoketoreductase activity. The binding of oxidized and reduced NADP(H) cofactors may be required for the regulation of potassium channel activity. The protein is Voltage-gated potassium channel subunit beta-3 of Rattus norvegicus (Rat).